Here is an 802-residue protein sequence, read N- to C-terminus: uncharacterized protein (802 aa).

The 36-residue stretch at 6-41 (SRSEKVKRIFQQFDGNLDGGLSREEMSALVVAVNPR) folds into the EF-hand 1 domain. 7 TPR repeats span residues 229–262 (FDGHMAIGKVLYEHQLFKEALVSFKRACELQPTD), 264–296 (RPHFKAGNCLYVLGKYKESKDEFLLALEAAESG), 305–338 (PQIYVNLGISLEGEGMVLSACEYYREAAILCPTH), 339–372 (YRALKLLGSALFGVGEYRAAVKALEEAIYLKPDY), 373–406 (ADAHCDLASSLHAMGEDERAIEVFQRAIDLKPGH), 407–440 (VDALYNLGGLYMDLGRFQRASEMYTRVLAVWPNH), and 442–474 (RAQLNKAVSLLGAGETEEAKRALKEALKMTNRV). Residues 595 to 630 (AIKAINEKILSVLDDSGSGRVDLGMFYAVIAPLCGG) form the EF-hand 2 domain.

This is an uncharacterized protein from Arabidopsis thaliana (Mouse-ear cress).